The primary structure comprises 144 residues: Large ribosomal subunit protein uL16 (144 aa).

This sequence belongs to the universal ribosomal protein uL16 family. Part of the 50S ribosomal subunit.

Binds 23S rRNA and is also seen to make contacts with the A and possibly P site tRNAs. In Novosphingobium aromaticivorans (strain ATCC 700278 / DSM 12444 / CCUG 56034 / CIP 105152 / NBRC 16084 / F199), this protein is Large ribosomal subunit protein uL16.